The chain runs to 314 residues: DNA-directed RNA polymerase subunit alpha (314 aa).

Residues 1 to 229 (MLESKLKAPV…EHLNYFANPE (229 aa)) are alpha N-terminal domain (alpha-NTD). Residues 246–314 (SAEEDLDLPL…LAKKGFTLKE (69 aa)) form an alpha C-terminal domain (alpha-CTD) region.

Belongs to the RNA polymerase alpha chain family. Homodimer. The RNAP catalytic core consists of 2 alpha, 1 beta, 1 beta' and 1 omega subunit. When a sigma factor is associated with the core the holoenzyme is formed, which can initiate transcription.

It carries out the reaction RNA(n) + a ribonucleoside 5'-triphosphate = RNA(n+1) + diphosphate. Its function is as follows. DNA-dependent RNA polymerase catalyzes the transcription of DNA into RNA using the four ribonucleoside triphosphates as substrates. In Thermus aquaticus, this protein is DNA-directed RNA polymerase subunit alpha (rpoA).